Here is a 634-residue protein sequence, read N- to C-terminus: Chaperone protein HtpG (634 aa).

The segment at 1–345 is a; substrate-binding; sequence MEHQQNHTFS…SNDLPLNVSR (345 aa). The segment at 346-562 is b; it reads EILQDTRVTA…NDDMSTQMAK (217 aa). The segment at 563-634 is c; the sequence is LMAQMGQPVP…VGRINKLLLA (72 aa).

This sequence belongs to the heat shock protein 90 family. Homodimer.

It localises to the cytoplasm. Molecular chaperone. Has ATPase activity. This is Chaperone protein HtpG from Psychromonas ingrahamii (strain DSM 17664 / CCUG 51855 / 37).